The chain runs to 706 residues: Elongation factor G (706 aa).

One can recognise a tr-type G domain in the interval 15 to 291 (LKTRNIGISA…GVLDYLASPV (277 aa)). Residues 24-31 (AHIDSGKT), 91-95 (DTPGH), and 145-148 (NKLD) each bind GTP.

The protein belongs to the TRAFAC class translation factor GTPase superfamily. Classic translation factor GTPase family. EF-G/EF-2 subfamily.

The protein localises to the cytoplasm. Catalyzes the GTP-dependent ribosomal translocation step during translation elongation. During this step, the ribosome changes from the pre-translocational (PRE) to the post-translocational (POST) state as the newly formed A-site-bound peptidyl-tRNA and P-site-bound deacylated tRNA move to the P and E sites, respectively. Catalyzes the coordinated movement of the two tRNA molecules, the mRNA and conformational changes in the ribosome. This chain is Elongation factor G, found in Leptospira interrogans serogroup Icterohaemorrhagiae serovar copenhageni (strain Fiocruz L1-130).